The following is a 296-amino-acid chain: Formylmethanofuran--tetrahydromethanopterin formyltransferase (296 aa).

Belongs to the FTR family. Homotetramer composed of two dimers. Dimerization is sufficient for enzyme activity, but tetramerization is required for high thermostability.

It is found in the cytoplasm. The catalysed reaction is N-formylmethanofuran + 5,6,7,8-tetrahydromethanopterin + H(+) = N(5)-formyl-5,6,7,8-tetrahydromethanopterin + methanofuran. It functions in the pathway one-carbon metabolism; methanogenesis from CO(2); 5,10-methenyl-5,6,7,8-tetrahydromethanopterin from CO(2): step 2/3. Requires high salt concentrations for activity and thermostability; 1.5-1.8 M KH(2)PO(4) stimulates activity while stabilizing the enzyme. Functionally, catalyzes the reversible transfer of a formyl group from formylmethanofuran (formyl-MFR) to tetrahydromethanopterin (H(4)MPT) to produce 5-formyl tetrahydromethanopterin (5-formyl-H(4)MPT) and methanofuran (MFR). Acts via a ternary-complex mechanism. Uses N-furfurylformamide much less efficiently, does not use N-methylformamide or formamide. Protein overexpressed in E.coli has very similar properties to enzyme purified from M.kandleri. The sequence is that of Formylmethanofuran--tetrahydromethanopterin formyltransferase from Methanopyrus kandleri (strain AV19 / DSM 6324 / JCM 9639 / NBRC 100938).